The chain runs to 358 residues: Metacaspase-3 (358 aa).

The tract at residues 1–84 (MGFDFGCLLK…APTHVSGTFR (84 aa)) is important for catalytic activity. Active-site residues include H168 and C223.

This sequence belongs to the peptidase C14B family. In epimastigotes, the unprocessed enzyme appears to be the main form. Auto-processing is dispensable for catalytic activity towards small oligopeptide substrates.

It localises to the cytoplasm. The protein localises to the nucleus. Its activity is regulated as follows. Activated by Ca(2+). In terms of biological role, cysteine protease that cleaves specifically after arginine or lysine residues. In epimastigotes, may play a role in cell cycle G1/S transition. This is Metacaspase-3 from Trypanosoma cruzi (strain CL Brener).